Here is a 283-residue protein sequence, read N- to C-terminus: Pantothenate synthetase (283 aa).

ATP is bound at residue 26-33 (MGNLHEGH). The active-site Proton donor is His33. Gln57 serves as a coordination point for (R)-pantoate. Gln57 is a binding site for beta-alanine. 144–147 (GKKD) contributes to the ATP binding site. Gln150 serves as a coordination point for (R)-pantoate. ATP-binding positions include Ile173 and 181 to 184 (LSSR).

It belongs to the pantothenate synthetase family. In terms of assembly, homodimer.

Its subcellular location is the cytoplasm. It catalyses the reaction (R)-pantoate + beta-alanine + ATP = (R)-pantothenate + AMP + diphosphate + H(+). It functions in the pathway cofactor biosynthesis; (R)-pantothenate biosynthesis; (R)-pantothenate from (R)-pantoate and beta-alanine: step 1/1. Catalyzes the condensation of pantoate with beta-alanine in an ATP-dependent reaction via a pantoyl-adenylate intermediate. In Polynucleobacter necessarius subsp. necessarius (strain STIR1), this protein is Pantothenate synthetase.